The following is a 141-amino-acid chain: Nucleoside diphosphate kinase (141 aa).

ATP is bound by residues Lys11, Phe59, Arg87, Thr93, Arg104, and Asn114. The active-site Pros-phosphohistidine intermediate is the His117.

The protein belongs to the NDK family. In terms of assembly, homotetramer. Mg(2+) is required as a cofactor.

It localises to the cytoplasm. The catalysed reaction is a 2'-deoxyribonucleoside 5'-diphosphate + ATP = a 2'-deoxyribonucleoside 5'-triphosphate + ADP. It carries out the reaction a ribonucleoside 5'-diphosphate + ATP = a ribonucleoside 5'-triphosphate + ADP. Its function is as follows. Major role in the synthesis of nucleoside triphosphates other than ATP. The ATP gamma phosphate is transferred to the NDP beta phosphate via a ping-pong mechanism, using a phosphorylated active-site intermediate. The protein is Nucleoside diphosphate kinase of Methylibium petroleiphilum (strain ATCC BAA-1232 / LMG 22953 / PM1).